The primary structure comprises 308 residues: MEEANNKESPYISSILPGWFSEISPLWPGEAHSLKVEKILFQGKSDYQNVMVFQSSTYGKVLILDGVIQLTERDECAYQEMITHLPLCSIPNPKKVLVIGGGDGGVLREVSRHSSVEQIDICEIDKMVIDVSKQFFPNVAIGYEDPRVKLHVGDGVAFLKFVAEGTYDAVIVDSSDPIGPAQELFEKPFFESVARALRPGGVVCTQAESIWLHMHIIEDIVANCRQIFKGSVNYAWTTVPTYPSGVIGFMLCSTEGPAVDFKNPINPVDADDSHTKTRGPLKFYNSEIHSASFCLPSFAKRVIESKGK.

The PABS domain maps to 17 to 254; sequence PGWFSEISPL…GVIGFMLCST (238 aa). Residue Gln48 participates in S-adenosyl 3-(methylsulfanyl)propylamine binding. Putrescine is bound at residue Tyr78. S-adenosyl 3-(methylsulfanyl)propylamine contacts are provided by residues Gln79, Asp103, Glu123, 154–155, and Asp173; that span reads DG. Asp173 serves as the catalytic Proton acceptor. Putrescine contacts are provided by residues 173–176 and Tyr242; that span reads DSSD.

The protein belongs to the spermidine/spermine synthase family.

It carries out the reaction S-adenosyl 3-(methylsulfanyl)propylamine + putrescine = S-methyl-5'-thioadenosine + spermidine + H(+). Its pathway is amine and polyamine biosynthesis; spermidine biosynthesis; spermidine from putrescine: step 1/1. The sequence is that of Spermidine synthase 1 from Datura stramonium (Jimsonweed).